The chain runs to 139 residues: Intrinsically disordered protein, expressed in pharynx 15 (139 aa).

Over residues 1–12 (MNNNQGMYNTQT) the composition is skewed to polar residues. Residues 1 to 98 (MNNNQGMYNT…GSSTPSPQYS (98 aa)) form a disordered region. Low complexity-rich tracts occupy residues 13–41 (TQGY…QTTT) and 49–98 (QPQQ…PQYS).

This chain is Intrinsically disordered protein, expressed in pharynx 15, found in Caenorhabditis elegans.